The primary structure comprises 286 residues: Beta-glucanase (286 aa).

Residues 1–30 (MCTMPLMKLKKMMRRTAFLLSVLIGCSMLG) form the signal peptide. In terms of domain architecture, GH16 spans 48 to 286 (FDYSGLPDPE…DYVRVYRWVE (239 aa)). The active-site Nucleophile is E158. The active-site Proton donor is the E163.

Belongs to the glycosyl hydrolase 16 family.

The enzyme catalyses Hydrolysis of (1-&gt;4)-beta-D-glucosidic linkages in beta-D-glucans containing (1-&gt;3)- and (1-&gt;4)-bonds.. In terms of biological role, shows activity on lichenan, beta-glucan and laminarin but not on CMC cellulose or xylan. The protein is Beta-glucanase (bglA) of Rhodothermus marinus (Rhodothermus obamensis).